Reading from the N-terminus, the 541-residue chain is Calcium-dependent protein kinase 25 (541 aa).

Residues 1–11 (MGQCCTGGGKA) are compositionally biased toward gly residues. The segment at 1 to 74 (MGQCCTGGGK…AGPIGEVLER (74 aa)) is disordered. A lipid anchor (N-myristoyl glycine) is attached at glycine 2. Residues 38–67 (AKQQPCSPAAKAAATEAAAAASSSKKPAGP) are compositionally biased toward low complexity. One can recognise a Protein kinase domain in the interval 83–341 (YSIGKELGRG…AFQVLNHPWI (259 aa)). Residues 89-97 (LGRGQFGVT) and lysine 112 each bind ATP. Aspartate 207 acts as the Proton acceptor in catalysis. An autoinhibitory domain region spans residues 347–377 (APDVPLDNVVLNRLKQFRAMNQFKKAALRII). EF-hand domains lie at 384-419 (EEIKGLKEMFKNIDKDNSGTITLEELKNGLAKQGTK), 420-455 (FSDNEIEQLMEAADADGNGIIDYEEFVTATVHMNKM), 456-491 (DREEHLYTAFQYFDKDNSGYITKEELEQALKEQGLY), and 493-526 (ANEIKDVITDADSNNDGRIDYSEFVAMMRKGSGC). Residues aspartate 397, aspartate 399, serine 401, threonine 403, glutamate 408, aspartate 433, aspartate 435, asparagine 437, glutamate 444, aspartate 469, aspartate 471, serine 473, tyrosine 475, glutamate 480, aspartate 504, asparagine 506, aspartate 508, arginine 510, and glutamate 515 each contribute to the Ca(2+) site.

Belongs to the protein kinase superfamily. Ser/Thr protein kinase family. CDPK subfamily. As to expression, specifically expressed in heading panicles, spikelets and mature pollen grains. Not expressed in vegetative tissues.

Its subcellular location is the membrane. It carries out the reaction L-seryl-[protein] + ATP = O-phospho-L-seryl-[protein] + ADP + H(+). The catalysed reaction is L-threonyl-[protein] + ATP = O-phospho-L-threonyl-[protein] + ADP + H(+). With respect to regulation, activated by calcium. Autophosphorylation may play an important role in the regulation of the kinase activity. In terms of biological role, may play a role in signal transduction pathways that involve calcium as a second messenger. The polypeptide is Calcium-dependent protein kinase 25 (Oryza sativa subsp. japonica (Rice)).